The sequence spans 642 residues: MDNREALKTFMTGENFYLQHYLGAHREELNGEHGYTFRVWAPNAQAVHLVGDFTNWIENQIPMVRNDFGVWEVFTNMAQEGHIYKYHVTRQNGHQLMKIDPFAVRYEARPGTGAIVTELPEKKWKDGLWLARRKRWGFEERPVNIYEVHAGSWKRNSDGSPYSFAQLKDELIPYLVEMNYTHIEFMPLMSHPLGLSWGYQLMGYFALEHAYGRPEEFQDFVEECHTHNIGVIVDWVPGHFTINDDALAYYDGTPTFEYQDHNKAHNHGWGALNFDLGKNEVQSFLISCIKHWIDVYHLDGIRVDAVSNMLYLDYDDAPWTPNKDGGNLNYEGYYFLQRLNEVIKLEYPDVMMIAEESSSAIKITGMKEIGGLGFDYKWNMGWMNDILRFYEEDPIYRKYDFNLVTFSFMYVFKENYLLPFSHDEVVHGKKSMMHKMWGDRYNQFAGLRNLYTYQICHPGKKLLFMGSEYGQFLEWKSEEQLEWSNLEDPMNAKMKYFASQLNQFYKDHRCLWEIDTSYDGIEIIDADNRDQSVLSFIRKGKKGEMLVCIFNMVPVERKDFTIGLPVAGIYEEVWNTELEEWGGVWKEHNQTVQTQEGLWKDYEQTLTFTLPAMGASVWKIKRRLKSTKTVTNKNQKGVENEK.

The active-site Nucleophile is Asp-304. Glu-355 serves as the catalytic Proton donor.

The protein belongs to the glycosyl hydrolase 13 family. GlgB subfamily. In terms of assembly, monomer.

The enzyme catalyses Transfers a segment of a (1-&gt;4)-alpha-D-glucan chain to a primary hydroxy group in a similar glucan chain.. The protein operates within glycan biosynthesis; glycogen biosynthesis. Catalyzes the formation of the alpha-1,6-glucosidic linkages in glycogen by scission of a 1,4-alpha-linked oligosaccharide from growing alpha-1,4-glucan chains and the subsequent attachment of the oligosaccharide to the alpha-1,6 position. The chain is 1,4-alpha-glucan branching enzyme GlgB from Streptococcus pneumoniae serotype 4 (strain ATCC BAA-334 / TIGR4).